We begin with the raw amino-acid sequence, 432 residues long: Lecithin-cholesterol acyltransferase-like 1 (432 aa).

Residues 7–29 (HYSVVIAILVVVTMTSMCQAVGS) traverse the membrane as a helical segment. Serine 209 acts as the Acyl-ester intermediate in catalysis. Residues aspartate 374 and histidine 400 each act as charge relay system in the active site.

It belongs to the AB hydrolase superfamily. Lipase family.

It localises to the membrane. The sequence is that of Lecithin-cholesterol acyltransferase-like 1 (LCAT1) from Arabidopsis thaliana (Mouse-ear cress).